Reading from the N-terminus, the 727-residue chain is Rho-related BTB domain-containing protein 2 (727 aa).

Residues 1 to 210 (MDSDMDYERP…DNAIRAALIS (210 aa)) form a rho-like region. GTP is bound by residues 21 to 28 (GDNAVGKT), 84 to 88 (DTFGD), and 140 to 143 (CQLD). 2 BTB domains span residues 266-442 (ADVI…DENE) and 500-567 (SDVT…TSSP). Residues 304–333 (ELGGPSEPGGTHPEDHQGHSDQHHHHHHHH) form a disordered region. Positions 315-324 (HPEDHQGHSD) are enriched in basic and acidic residues. The disordered stretch occupies residues 703 to 727 (FWNSPSSPSSSAASSSSPSSSSAVV). Over residues 706 to 727 (SPSSPSSSAASSSSPSSSSAVV) the composition is skewed to low complexity.

The protein belongs to the small GTPase superfamily. Rho family. As to quaternary structure, interacts with HSP90AA1 and HSP90AB1. Forms a complex with CUL3 and RBX1. Interacts (via BTB 1 domain) with CUL3. Interacts with MSI2. Autoubiquitinated by RHOBTB2-CUL3-RBX1 ubiquitin ligase complex. In terms of tissue distribution, ubiquitous, with highest levels in neural tissues. Expression is also detected in fetal lung, heart, and brain.

Regulator of cell proliferation and apoptosis. It likely functions as a substrate-adapter that recruits key substrates, e.g. MSI2, to CUL3-based ubiquitin ligase complexes for degradation. Required for MSI2 ubiquitination and degradation. The chain is Rho-related BTB domain-containing protein 2 (RHOBTB2) from Homo sapiens (Human).